The following is a 101-amino-acid chain: MVKHSRGYRTRSRSLLRKSPRERGAVPSLSRLMVEYKEGDKVVIKINPSVHSGMPHRRYQGKVGKIIGKRGRAYLVSVTLGDKQKVIIVRPEHLVSFSSSG.

Residues 1–18 (MVKHSRGYRTRSRSLLRK) show a composition bias toward basic residues. Residues 1–23 (MVKHSRGYRTRSRSLLRKSPRER) are disordered.

This sequence belongs to the eukaryotic ribosomal protein eL21 family.

This Saccharolobus islandicus (strain Y.G.57.14 / Yellowstone #1) (Sulfolobus islandicus) protein is Large ribosomal subunit protein eL21.